The sequence spans 38 residues: Photosystem II reaction center protein L (38 aa).

The helical transmembrane segment at 17–37 (SLFWGLLLIFVLAVLFSSYFF) threads the bilayer.

It belongs to the PsbL family. As to quaternary structure, PSII is composed of 1 copy each of membrane proteins PsbA, PsbB, PsbC, PsbD, PsbE, PsbF, PsbH, PsbI, PsbJ, PsbK, PsbL, PsbM, PsbT, PsbY, PsbZ, Psb30/Ycf12, at least 3 peripheral proteins of the oxygen-evolving complex and a large number of cofactors. It forms dimeric complexes.

It is found in the plastid. The protein localises to the chloroplast thylakoid membrane. One of the components of the core complex of photosystem II (PSII). PSII is a light-driven water:plastoquinone oxidoreductase that uses light energy to abstract electrons from H(2)O, generating O(2) and a proton gradient subsequently used for ATP formation. It consists of a core antenna complex that captures photons, and an electron transfer chain that converts photonic excitation into a charge separation. This subunit is found at the monomer-monomer interface and is required for correct PSII assembly and/or dimerization. The polypeptide is Photosystem II reaction center protein L (Cyanidium caldarium (Red alga)).